Here is a 92-residue protein sequence, read N- to C-terminus: Small ribosomal subunit protein bS18 (92 aa).

Positions Met-1–Arg-22 are disordered.

This sequence belongs to the bacterial ribosomal protein bS18 family. In terms of assembly, part of the 30S ribosomal subunit. Forms a tight heterodimer with protein bS6.

Its function is as follows. Binds as a heterodimer with protein bS6 to the central domain of the 16S rRNA, where it helps stabilize the platform of the 30S subunit. The chain is Small ribosomal subunit protein bS18 from Citrifermentans bemidjiense (strain ATCC BAA-1014 / DSM 16622 / JCM 12645 / Bem) (Geobacter bemidjiensis).